Reading from the N-terminus, the 60-residue chain is Conotoxin Cl1.1 (60 aa).

The N-terminal stretch at 1 to 19 (MRCLPVIVILLLLISSAAA) is a signal peptide. Residues 20–48 (VVEGPLRVNRRLRPRKAPVDMQARDWNWG) constitute a propeptide that is removed on maturation.

It belongs to the conotoxin T superfamily. Post-translationally, contains 2 disulfide bonds. As to expression, expressed by the venom duct.

Its subcellular location is the secreted. In Californiconus californicus (California cone), this protein is Conotoxin Cl1.1.